The primary structure comprises 288 residues: Beta-lactamase PSE-1 (288 aa).

Residues 1 to 17 (MKFLLAFSLLIPSVVFA) form the signal peptide. Residue Ser65 is the Acyl-ester intermediate of the active site. An intrachain disulfide couples Cys72 to Cys118. 229 to 231 (RSG) lines the substrate pocket.

Belongs to the class-A beta-lactamase family. Monomer.

The catalysed reaction is a beta-lactam + H2O = a substituted beta-amino acid. With respect to regulation, inhibited by p-chloromercuribenzoate but not by cloxacillin. Its function is as follows. Hydrolyzes penicillin, ampicillin and carbenicillin but not other antibiotics including oxacillin, methicillin and cloxacillin. This chain is Beta-lactamase PSE-1, found in Pseudomonas aeruginosa.